The chain runs to 524 residues: Alkaline phosphatase, tissue-nonspecific isozyme (524 aa).

The signal sequence occupies residues Met-1–Ser-17. Asp-60 provides a ligand contact to Mg(2+). 2 residues coordinate Zn(2+): Asp-60 and Ser-110. Residue Ser-110 is the Phosphoserine intermediate of the active site. Ser-110 is subject to Phosphoserine. The cysteines at positions 139 and 201 are disulfide-linked. Asn-140 carries N-linked (GlcNAc...) asparagine glycosylation. Thr-173 is a Mg(2+) binding site. An N-linked (GlcNAc...) asparagine glycan is attached at Asn-230. Glu-235 contributes to the Ca(2+) binding site. An N-linked (GlcNAc...) asparagine glycan is attached at Asn-271. Phe-290 and Glu-291 together coordinate Ca(2+). A glycan (N-linked (GlcNAc...) asparagine) is linked at Asn-303. Asp-306 contributes to the Ca(2+) binding site. Glu-332 is a binding site for Mg(2+). Zn(2+) is bound by residues Asp-337, His-341, Asp-378, and His-379. Residue Asn-430 is glycosylated (N-linked (GlcNAc...) asparagine). His-454 is a binding site for Zn(2+). Cys-489 and Cys-497 are joined by a disulfide. A lipid anchor (GPI-anchor amidated serine) is attached at Ser-501. Positions Ser-502 to Phe-524 are cleaved as a propeptide — removed in mature form.

The protein belongs to the alkaline phosphatase family. In terms of assembly, homodimer. Requires Mg(2+) as cofactor. Zn(2+) is required as a cofactor. The cofactor is Ca(2+). N-glycosylated.

Its subcellular location is the cell membrane. It localises to the extracellular vesicle membrane. The protein resides in the mitochondrion membrane. It is found in the mitochondrion intermembrane space. It catalyses the reaction a phosphate monoester + H2O = an alcohol + phosphate. The enzyme catalyses diphosphate + H2O = 2 phosphate + H(+). It carries out the reaction pyridoxal 5'-phosphate + H2O = pyridoxal + phosphate. The catalysed reaction is phosphoethanolamine + H2O = ethanolamine + phosphate. It catalyses the reaction N-phosphocreatine + H2O = creatine + phosphate. The enzyme catalyses ATP + H2O = ADP + phosphate + H(+). It carries out the reaction ADP + H2O = AMP + phosphate + H(+). The catalysed reaction is AMP + H2O = adenosine + phosphate. Phosphatase activity is specifically inhibited by 5-((5-chloro-2-methoxyphenyl)sulfonamido)nicotinamide (SBI-425). Alkaline phosphatase that metabolizes various phosphate compounds and plays a key role in skeletal mineralization and adaptive thermogenesis. Has broad substrate specificity and can hydrolyze a considerable variety of compounds: however, only a few substrates, such as diphosphate (inorganic pyrophosphate; PPi), pyridoxal 5'-phosphate (PLP) and N-phosphocreatine are natural substrates. Plays an essential role in skeletal and dental mineralization via its ability to hydrolyze extracellular diphosphate, a potent mineralization inhibitor, to phosphate: it thereby promotes hydroxyapatite crystal formation and increases inorganic phosphate concentration. Acts in a non-redundant manner with PHOSPHO1 in skeletal mineralization: while PHOSPHO1 mediates the initiation of hydroxyapatite crystallization in the matrix vesicles (MVs), ALPL/TNAP catalyzes the spread of hydroxyapatite crystallization in the extracellular matrix. Also promotes dephosphorylation of osteopontin (SSP1), an inhibitor of hydroxyapatite crystallization in its phosphorylated state; it is however unclear whether ALPL/TNAP mediates SSP1 dephosphorylation via a direct or indirect manner. Catalyzes dephosphorylation of PLP to pyridoxal (PL), the transportable form of vitamin B6, in order to provide a sufficient amount of PLP in the brain, an essential cofactor for enzymes catalyzing the synthesis of diverse neurotransmitters. Additionally, also able to mediate ATP degradation in a stepwise manner to adenosine, thereby regulating the availability of ligands for purinergic receptors. Also capable of dephosphorylating microbial products, such as lipopolysaccharides (LPS) as well as other phosphorylated small-molecules, such as poly-inosine:cytosine (poly I:C). Acts as a key regulator of adaptive thermogenesis as part of the futile creatine cycle: localizes to the mitochondria of thermogenic fat cells and acts by mediating hydrolysis of N-phosphocreatine to initiate a futile cycle of creatine dephosphorylation and phosphorylation. During the futile creatine cycle, creatine and N-phosphocreatine are in a futile cycle, which dissipates the high energy charge of N-phosphocreatine as heat without performing any mechanical or chemical work. The chain is Alkaline phosphatase, tissue-nonspecific isozyme (Alpl) from Rattus norvegicus (Rat).